The following is an 857-amino-acid chain: MPQKTSETPMMQQYNEIKAQYPDAFLFYRIGDFYELFNDDAIKGAQLLELTLTARNKSADDPIPMAGVPHHAVQSYVDILIDHGYKVAICEQMEDPKKAVGMVKRAVIQLVTPGTNVDIKAGAAKSNNYITAVMPHAAGYAFAYADVSTGELKVTDLKSKFALQNELSALATKEIVVPEELTDDDAGMLKQGERLLSVQPDAEPTSEGSYVSQALTDPAEAAVVQMLMAYLLNTQKRSLAHIQKAVAYQPSAYLEMDQDARSNLDILQNSRTGRKGDTLLSLLDSTKTAMGGRLLKQWLDRPLLDIDAISVRQNQVQDLLDHFFERSELQERLTKVYDLERLAGRVAFGTVNGRDLIQLQTSLDQIPAIQDVLGKLDDGSFKALRSKMDPVSDVAGLIRRAIEPEPPISVTDGGLILRGYNQKLDSYRDAMKNSKQWIAELEASERKATGIHTLKIRYNKVFGYFIEVTKSNLDKIPEGRYERKQTLTNAERFITPELKEKETLILEAQESSTALEYDLFQDIRDKVKAQIKRLQALAAQISSLDVLQSFATVAENSHYVRPTMHAGTHDINVKGGRHPVVEHVLGRDSYIPNDVIMNHDTDMLLITGPNMSGKSTYMRQLALIVIMAQAGSFVPADVADLPIFDQIFTRIGAADDLANGESTFMVEMLEANAALSHATASSLILFDEIGRGTATYDGMALAQAIIEFLHDHVHAKTLFSTHYHELTSLSDSLAKLKNVHVGAVEEHGNLVFLHKMMPGPADKSYGIHVAKLAGLPADLLARADTILKQLEADAPNKTAPAPAPQVEEQQLSLFEEPKPTPKNSPILTKLAKFDLMAATPMDAMNFIFDLQKHLKKK.

Residue 608–615 (GPNMSGKS) participates in ATP binding.

It belongs to the DNA mismatch repair MutS family.

Its function is as follows. This protein is involved in the repair of mismatches in DNA. It is possible that it carries out the mismatch recognition step. This protein has a weak ATPase activity. In Lacticaseibacillus paracasei (strain ATCC 334 / BCRC 17002 / CCUG 31169 / CIP 107868 / KCTC 3260 / NRRL B-441) (Lactobacillus paracasei), this protein is DNA mismatch repair protein MutS.